Reading from the N-terminus, the 147-residue chain is D-aminoacyl-tRNA deacylase (147 aa).

The short motif at Gly138–Pro139 is the Gly-cisPro motif, important for rejection of L-amino acids element.

Belongs to the DTD family. Homodimer.

The protein resides in the cytoplasm. The enzyme catalyses glycyl-tRNA(Ala) + H2O = tRNA(Ala) + glycine + H(+). It carries out the reaction a D-aminoacyl-tRNA + H2O = a tRNA + a D-alpha-amino acid + H(+). Functionally, an aminoacyl-tRNA editing enzyme that deacylates mischarged D-aminoacyl-tRNAs. Also deacylates mischarged glycyl-tRNA(Ala), protecting cells against glycine mischarging by AlaRS. Acts via tRNA-based rather than protein-based catalysis; rejects L-amino acids rather than detecting D-amino acids in the active site. By recycling D-aminoacyl-tRNA to D-amino acids and free tRNA molecules, this enzyme counteracts the toxicity associated with the formation of D-aminoacyl-tRNA entities in vivo and helps enforce protein L-homochirality. This chain is D-aminoacyl-tRNA deacylase, found in Prosthecochloris aestuarii (strain DSM 271 / SK 413).